The primary structure comprises 366 residues: tRNA/tmRNA (uracil-C(5))-methyltransferase (366 aa).

Positions 190, 218, 223, 239, and 299 each coordinate S-adenosyl-L-methionine. C324 acts as the Nucleophile in catalysis. E358 (proton acceptor) is an active-site residue.

The protein belongs to the class I-like SAM-binding methyltransferase superfamily. RNA M5U methyltransferase family. TrmA subfamily.

The enzyme catalyses uridine(54) in tRNA + S-adenosyl-L-methionine = 5-methyluridine(54) in tRNA + S-adenosyl-L-homocysteine + H(+). The catalysed reaction is uridine(341) in tmRNA + S-adenosyl-L-methionine = 5-methyluridine(341) in tmRNA + S-adenosyl-L-homocysteine + H(+). Functionally, dual-specificity methyltransferase that catalyzes the formation of 5-methyluridine at position 54 (m5U54) in all tRNAs, and that of position 341 (m5U341) in tmRNA (transfer-mRNA). The protein is tRNA/tmRNA (uracil-C(5))-methyltransferase of Shigella boydii serotype 18 (strain CDC 3083-94 / BS512).